A 562-amino-acid polypeptide reads, in one-letter code: Proton channel OTOP2 (562 aa).

A disordered region spans residues 1-20 (MSEELAQGPKESPPAPRAGP). The next 12 helical transmembrane spans lie at 30–50 (LLSVLLAVNVLLLACTLISGG), 62–82 (VFALLTAMMLLATLWILFYLL), 100–120 (PIWLRGGLVLFGICTLIMDVF), 137–157 (ILHPLIQAVFVIIQTYFLWVS), 169–189 (TWCGLMFTLTTNLAIWMAAVV), 241–261 (FYLYPFNIEYSLFASTMLYVM), 289–309 (FFAGPVLGLLLFVVGLAVFII), 324–344 (ALVIYYSFNIVCLGLTTLVSL), 371–391 (LLMGAALGQYAISYYSIVAVV), 402–422 (LNLTHALLMIAQHTFQNMFII), 495–515 (DISLFLLLCNVILWIMPAFGA), and 527–547 (FYGYSLWAVIVNICLPFGIFY).

It belongs to the otopetrin family.

It localises to the cell membrane. It carries out the reaction H(+)(in) = H(+)(out). With respect to regulation, actives at neutral and alkaline extracellular pH, acid extracellular pH appears to inhibit the channel. Insensitive to activation by Zn(2+). Functionally, proton-selective ion channel open at neutral pH. Actives at neutral and alkaline extracellular pH, likely participates in some alkali-related physiological activities. The chain is Proton channel OTOP2 from Homo sapiens (Human).